The primary structure comprises 188 residues: UPF0301 protein CPn_0139/CP_0633/CPj0139/CpB0140 (188 aa).

The protein belongs to the UPF0301 (AlgH) family.

The polypeptide is UPF0301 protein CPn_0139/CP_0633/CPj0139/CpB0140 (Chlamydia pneumoniae (Chlamydophila pneumoniae)).